The primary structure comprises 427 residues: Enolase (427 aa).

Gln163 is a binding site for (2R)-2-phosphoglycerate. Residue Glu205 is the Proton donor of the active site. Residues Asp242, Glu285, and Asp312 each coordinate Mg(2+). (2R)-2-phosphoglycerate contacts are provided by Lys337, Arg366, Ser367, and Lys388. Catalysis depends on Lys337, which acts as the Proton acceptor.

The protein belongs to the enolase family. Requires Mg(2+) as cofactor.

It localises to the cytoplasm. It is found in the secreted. The protein localises to the cell surface. The catalysed reaction is (2R)-2-phosphoglycerate = phosphoenolpyruvate + H2O. It functions in the pathway carbohydrate degradation; glycolysis; pyruvate from D-glyceraldehyde 3-phosphate: step 4/5. Its function is as follows. Catalyzes the reversible conversion of 2-phosphoglycerate (2-PG) into phosphoenolpyruvate (PEP). It is essential for the degradation of carbohydrates via glycolysis. The protein is Enolase of Beijerinckia indica subsp. indica (strain ATCC 9039 / DSM 1715 / NCIMB 8712).